Consider the following 33-residue polypeptide: Large ribosomal subunit protein uL24 (33 aa).

It belongs to the universal ribosomal protein uL24 family. As to quaternary structure, component of the large ribosomal subunit.

The protein localises to the cytoplasm. Its function is as follows. Component of the large ribosomal subunit. The ribosome is a large ribonucleoprotein complex responsible for the synthesis of proteins in the cell. The protein is Large ribosomal subunit protein uL24 (rpl26) of Xenopus laevis (African clawed frog).